A 339-amino-acid polypeptide reads, in one-letter code: Serine/threonine-protein kinase pdik1l-A (339 aa).

The Protein kinase domain maps to 8–332 (YDLIREVGRG…LELKLIQIAF (325 aa)). Residues 14 to 22 (VGRGSYGVV) and lysine 37 contribute to the ATP site. Catalysis depends on aspartate 164, which acts as the Proton acceptor.

The protein belongs to the protein kinase superfamily. Ser/Thr protein kinase family.

Its subcellular location is the nucleus. It catalyses the reaction L-seryl-[protein] + ATP = O-phospho-L-seryl-[protein] + ADP + H(+). It carries out the reaction L-threonyl-[protein] + ATP = O-phospho-L-threonyl-[protein] + ADP + H(+). This is Serine/threonine-protein kinase pdik1l-A (pdik1-a) from Xenopus laevis (African clawed frog).